Reading from the N-terminus, the 368-residue chain is Alanine racemase (368 aa).

The Proton acceptor; specific for D-alanine role is filled by lysine 40. Lysine 40 is modified (N6-(pyridoxal phosphate)lysine). Position 134 (arginine 134) interacts with substrate. The active-site Proton acceptor; specific for L-alanine is the tyrosine 263. Substrate is bound at residue methionine 310.

This sequence belongs to the alanine racemase family. Pyridoxal 5'-phosphate serves as cofactor.

The catalysed reaction is L-alanine = D-alanine. It participates in amino-acid biosynthesis; D-alanine biosynthesis; D-alanine from L-alanine: step 1/1. In terms of biological role, catalyzes the interconversion of L-alanine and D-alanine. May also act on other amino acids. The polypeptide is Alanine racemase (alr) (Listeria monocytogenes serotype 1/2a (strain 10403S)).